The following is a 326-amino-acid chain: tRNA(Ile)-lysidine synthase (326 aa).

Position 25–30 (25–30 (SGGQDS)) interacts with ATP.

The protein belongs to the tRNA(Ile)-lysidine synthase family.

It is found in the cytoplasm. It catalyses the reaction cytidine(34) in tRNA(Ile2) + L-lysine + ATP = lysidine(34) in tRNA(Ile2) + AMP + diphosphate + H(+). Ligates lysine onto the cytidine present at position 34 of the AUA codon-specific tRNA(Ile) that contains the anticodon CAU, in an ATP-dependent manner. Cytidine is converted to lysidine, thus changing the amino acid specificity of the tRNA from methionine to isoleucine. This Prochlorococcus marinus (strain NATL1A) protein is tRNA(Ile)-lysidine synthase.